We begin with the raw amino-acid sequence, 330 residues long: Serine/threonine-protein phosphatase beta isoform (330 aa).

Residues aspartate 63, histidine 65, aspartate 91, and asparagine 123 each contribute to the Mn(2+) site. The active-site Proton donor is the histidine 124. Mn(2+) is bound by residues histidine 172 and histidine 247. The segment covering 308-319 (GMNSSRPTTPQR) has biased composition (polar residues). The segment at 308–330 (GMNSSRPTTPQRSAPMLATNKKK) is disordered. Phosphothreonine occurs at positions 315 and 316.

This sequence belongs to the PPP phosphatase family. PP-1 subfamily. In terms of assembly, interacts with Nop17l. Interacts with uri; uri inhibits flw phosphatase activity. Mn(2+) is required as a cofactor.

It catalyses the reaction O-phospho-L-seryl-[protein] + H2O = L-seryl-[protein] + phosphate. The enzyme catalyses O-phospho-L-threonyl-[protein] + H2O = L-threonyl-[protein] + phosphate. Functionally, required for cell adhesion in non-muscle tissues and in maintenance of muscle attachment. Vital for larval development. The chain is Serine/threonine-protein phosphatase beta isoform (flw) from Drosophila melanogaster (Fruit fly).